A 190-amino-acid chain; its full sequence is dCTP deaminase (190 aa).

113-118 contributes to the dCTP binding site; it reads KSTYAR. Catalysis depends on glutamate 139, which acts as the Proton donor/acceptor. DCTP is bound by residues glutamine 158, tyrosine 172, lysine 181, and glutamine 182.

It belongs to the dCTP deaminase family. Homotrimer.

It carries out the reaction dCTP + H2O + H(+) = dUTP + NH4(+). Its pathway is pyrimidine metabolism; dUMP biosynthesis; dUMP from dCTP (dUTP route): step 1/2. In terms of biological role, catalyzes the deamination of dCTP to dUTP. The sequence is that of dCTP deaminase from Chlamydia abortus (strain DSM 27085 / S26/3) (Chlamydophila abortus).